Reading from the N-terminus, the 713-residue chain is Calpastatin (713 aa).

Low complexity predominate over residues 1–21 (MSRPGPKPAASSRPRRGAAAS). Residues 1 to 152 (MSRPGPKPAA…SADGESVAGG (152 aa)) are disordered. The span at 47–64 (VTASSAATGTSPRMSTTG) shows a compositional bias: polar residues. Position 57 is a phosphoserine (S57). A Glycyl lysine isopeptide (Lys-Gly) (interchain with G-Cter in SUMO2) cross-link involves residue K69. K86 is modified (N6-acetyllysine). A compositionally biased stretch (polar residues) spans 120–129 (SRSNEQIVSE). S122 and S171 each carry phosphoserine. Phosphothreonine is present on T173. An Inhibitory domain 1 repeat occupies 208-260 (TNKDDPPYTGPVVLDPMDSTYLEALGIKEGTIPPEYRKLLEKNEAITGPLPDS). Residues 253–402 (ITGPLPDSPK…PEETSKCLSE (150 aa)) are disordered. S260 and S281 each carry phosphoserine. 3 stretches are compositionally biased toward polar residues: residues 275 to 285 (SDFTCSSPTGK), 294 to 304 (GESSKAQSAGV), and 326 to 346 (QALQ…QSHL). Residues 341 to 393 (DPQSHLRQAKQVKEAKAKEERQEKCGEDEDTVPAEYRLKPAKDKDGKPLLPEP) form an Inhibitory domain 2 repeat. 2 stretches are compositionally biased toward basic and acidic residues: residues 351-365 (QVKE…QEKC) and 376-387 (YRLKPAKDKDGK). Phosphoserine is present on residues S401, S403, S410, and S445. The segment at 442 to 507 (LARSLGTRKE…PLLPKEAEEQ (66 aa)) is disordered. Positions 448–505 (TRKEDPEDEKSLVDKVKEKAKEEDHEKLGEKEETIPPDYRLEIVKDKDGKPLLPKEAE) are enriched in basic and acidic residues. One copy of the Inhibitory domain 3 repeat lies at 451 to 504 (EDPEDEKSLVDKVKEKAKEEDHEKLGEKEETIPPDYRLEIVKDKDGKPLLPKEA). 2 positions are modified to phosphoserine: S521 and S532. Residues 544–558 (VSETVSQVPAPSNHT) show a composition bias toward polar residues. The disordered stretch occupies residues 544-713 (VSETVSQVPA…PKPKVDEDAT (170 aa)). Phosphoserine occurs at positions 580 and 582. The Inhibitory domain 4 repeat unit spans residues 588–641 (PDPDENKPLDDKVKEKIKAEHSEKLGERDDTIPPEYRHLLDNDGKDKPEKPLTK). 2 stretches are compositionally biased toward basic and acidic residues: residues 588 to 648 (PDPD…KLGQ) and 687 to 713 (SKNE…EDAT).

Belongs to the protease inhibitor I27 (calpastatin) family.

Its function is as follows. Specific inhibition of calpain (calcium-dependent cysteine protease). Plays a key role in postmortem tenderization of meat and have been proposed to be involved in muscle protein degradation in living tissue. The polypeptide is Calpastatin (Cast) (Rattus norvegicus (Rat)).